A 185-amino-acid polypeptide reads, in one-letter code: Probable chorismate pyruvate-lyase (185 aa).

Substrate is bound by residues Arg75, Leu113, and Glu170.

The protein belongs to the UbiC family.

It is found in the cytoplasm. The catalysed reaction is chorismate = 4-hydroxybenzoate + pyruvate. It functions in the pathway cofactor biosynthesis; ubiquinone biosynthesis. Removes the pyruvyl group from chorismate, with concomitant aromatization of the ring, to provide 4-hydroxybenzoate (4HB) for the ubiquinone pathway. The chain is Probable chorismate pyruvate-lyase from Coxiella burnetii (strain RSA 493 / Nine Mile phase I).